We begin with the raw amino-acid sequence, 166 residues long: Small ribosomal subunit protein uS5 (166 aa).

The region spanning 11 to 74 (LQEKLVAVNR…EQARRNMVKV (64 aa)) is the S5 DRBM domain.

Belongs to the universal ribosomal protein uS5 family. In terms of assembly, part of the 30S ribosomal subunit. Contacts proteins S4 and S8.

Functionally, with S4 and S12 plays an important role in translational accuracy. In terms of biological role, located at the back of the 30S subunit body where it stabilizes the conformation of the head with respect to the body. The protein is Small ribosomal subunit protein uS5 of Tolumonas auensis (strain DSM 9187 / NBRC 110442 / TA 4).